An 842-amino-acid polypeptide reads, in one-letter code: Outer membrane usher protein AggC (842 aa).

Positions 1–21 (MKTSSFIIVILLCFRIENVIA) are cleaved as a signal peptide. Cys-819 and Cys-841 are oxidised to a cystine.

This sequence belongs to the fimbrial export usher family.

The protein resides in the cell outer membrane. Its function is as follows. Involved in the export and assembly of the AAF/I fimbriae subunits across the outer membrane. The chain is Outer membrane usher protein AggC (aggC) from Escherichia coli.